A 311-amino-acid chain; its full sequence is Syndecan-1 (311 aa).

The first 22 residues, 1–22, serve as a signal peptide directing secretion; the sequence is MRRAALWLWLCALALRLQPALL. The Extracellular segment spans residues 23–255; sequence HSVAVNMPPE…GLLDRKEVLG (233 aa). Disordered regions lie at residues 31-85 and 141-244; these read PEDQ…PDAI and TMAP…TGAS. Residues 32–42 show a composition bias toward acidic residues; that stretch reads EDQDGSGDDSD. The O-linked (Xyl...) (chondroitin sulfate) serine glycan is linked to Ser-37. An N-linked (GlcNAc...) asparagine glycan is attached at Asn-43. Ser-45 and Ser-47 each carry an O-linked (Xyl...) (heparan sulfate) serine glycan. A compositionally biased stretch (low complexity) spans 71–84; the sequence is TTTATAPEPTSPDA. 2 stretches are compositionally biased toward basic and acidic residues: residues 151-162 and 169-180; these read PHRDVQPDHHET and GRMEPHRPHVEE. O-linked (Xyl...) (chondroitin sulfate) serine glycans are attached at residues Ser-204 and Ser-214. A compositionally biased stretch (low complexity) spans 215-226; the sequence is GENAAGAAGEPG. A helical transmembrane segment spans residues 256-276; that stretch reads GVIAGGLVGLIFAVCLVGFML. Topologically, residues 277–311 are cytoplasmic; sequence YRMKKKDEGSYSLEEPKQANGGAYQKPTKQEEFYA. Residues 285–311 form a disordered region; sequence GSYSLEEPKQANGGAYQKPTKQEEFYA. Ser-286 is subject to Phosphoserine.

This sequence belongs to the syndecan proteoglycan family. As to quaternary structure, interacts with CDCP1. Interacts (via C-terminus) with TIAM1 (via PDZ domain). Interacts with MDK. Post-translationally, shedding is enhanced by a number of factors such as heparanase, thrombin or EGF. Also by stress and wound healing. PMA-mediated shedding is inhibited by TIMP3.

It localises to the membrane. The protein resides in the secreted. It is found in the extracellular exosome. In terms of biological role, cell surface proteoglycan that contains both heparan sulfate and chondroitin sulfate and that links the cytoskeleton to the interstitial matrix. Regulates exosome biogenesis in concert with SDCBP and PDCD6IP. Able to induce its own expression in dental mesenchymal cells and also in the neighboring dental epithelial cells via an MSX1-mediated pathway. The sequence is that of Syndecan-1 from Bos taurus (Bovine).